The following is a 301-amino-acid chain: Large ribosomal subunit protein uL18z (301 aa).

This sequence belongs to the universal ribosomal protein uL18 family. Component of the large ribosomal subunit (LSU). Expressed in seedlings, roots, stems, leaves, inflorescences and siliques.

The protein localises to the cytoplasm. Its subcellular location is the nucleus. It localises to the nucleolus. The protein resides in the nucleoplasm. Component of the ribosome, a large ribonucleoprotein complex responsible for the synthesis of proteins in the cell. The small ribosomal subunit (SSU) binds messenger RNAs (mRNAs) and translates the encoded message by selecting cognate aminoacyl-transfer RNA (tRNA) molecules. The large subunit (LSU) contains the ribosomal catalytic site termed the peptidyl transferase center (PTC), which catalyzes the formation of peptide bonds, thereby polymerizing the amino acids delivered by tRNAs into a polypeptide chain. The nascent polypeptides leave the ribosome through a tunnel in the LSU and interact with protein factors that function in enzymatic processing, targeting, and the membrane insertion of nascent chains at the exit of the ribosomal tunnel. Seems involved in the regulation of cell proliferation. Essential in leaf polarity establishment, probably having a role for translation in leaf dorsoventral patterning to specify leaf adaxial identity. This chain is Large ribosomal subunit protein uL18z, found in Arabidopsis thaliana (Mouse-ear cress).